The chain runs to 301 residues: Small ribosomal subunit biogenesis GTPase RsgA (301 aa).

In terms of domain architecture, CP-type G spans 65-224 (YNQLIRPKVA…LVDTPGFGNL (160 aa)). GTP is bound by residues 115 to 118 (SKYD) and 167 to 175 (GNSGVGKST). Residues Cys-247, Cys-252, His-254, and Cys-260 each coordinate Zn(2+).

Belongs to the TRAFAC class YlqF/YawG GTPase family. RsgA subfamily. As to quaternary structure, monomer. Associates with 30S ribosomal subunit, binds 16S rRNA. Requires Zn(2+) as cofactor.

It localises to the cytoplasm. Functionally, one of several proteins that assist in the late maturation steps of the functional core of the 30S ribosomal subunit. Helps release RbfA from mature subunits. May play a role in the assembly of ribosomal proteins into the subunit. Circularly permuted GTPase that catalyzes slow GTP hydrolysis, GTPase activity is stimulated by the 30S ribosomal subunit. The polypeptide is Small ribosomal subunit biogenesis GTPase RsgA (Ureaplasma urealyticum serovar 10 (strain ATCC 33699 / Western)).